We begin with the raw amino-acid sequence, 477 residues long: ATP-dependent rRNA helicase RRP3 (477 aa).

The disordered stretch occupies residues 1-22 (MSVKVDGMINKKSKTHSKKLDA). Residues 65–93 (KSFNELKLIPELLEAIQQMKFTKPTPIQS) carry the Q motif motif. The Helicase ATP-binding domain maps to 96–267 (IPHALEGKDI…RASLHNPVRV (172 aa)). Residue 109–116 (AQTGSGKT) participates in ATP binding. A DEAD box motif is present at residues 215 to 218 (DEAD). The Helicase C-terminal domain maps to 294-438 (YLIHLLNEFL…KDPSPSKAVL (145 aa)). A disordered region spans residues 452–477 (AIRQTKDFHEKRNPKKNRDDRDREER).

Belongs to the DEAD box helicase family. DDX47/RRP3 subfamily. As to quaternary structure, interacts with the SSU processome.

The protein resides in the nucleus. The enzyme catalyses ATP + H2O = ADP + phosphate + H(+). In terms of biological role, ATP-dependent rRNA helicase required for pre-ribosomal RNA processing. Involved in the maturation of the 35S-pre-rRNA and to its cleavage to mature 18S rRNA. In Debaryomyces hansenii (strain ATCC 36239 / CBS 767 / BCRC 21394 / JCM 1990 / NBRC 0083 / IGC 2968) (Yeast), this protein is ATP-dependent rRNA helicase RRP3.